The chain runs to 590 residues: Conglutin beta 4 (590 aa).

Positions 1–30 (MIKMRVRFPTLVLLLGIVFLMAVSIGIAYG) are cleaved as a signal peptide. The span at 38–105 (HERPQEREQE…REPRREREQE (68 aa)) shows a compositional bias: basic and acidic residues. The disordered stretch occupies residues 38 to 175 (HERPQEREQE…DSRRQRNPYY (138 aa)). The span at 137–146 (QGSSSSSRRQ) shows a compositional bias: low complexity. Residues 174–332 (YYFSSERFQT…TFNTRYEEIQ (159 aa)) form the Cupin type-1 1 domain. Asn-239 carries an N-linked (GlcNAc...) asparagine glycan. 2 disordered regions span residues 340 to 362 (DEQE…GVIV) and 374 to 396 (KYAQ…LRSN). Residues 346 to 362 (EQRHGQEQSHQDEGVIV) show a composition bias toward basic and acidic residues. The Cupin type-1 2 domain maps to 391-548 (FNLRSNKPIY…TFPGSTEDVE (158 aa)). A glycan (N-linked (GlcNAc...) asparagine) is linked at Asn-498. The interval 559–579 (FANAQPQQQQQREREGRRGRR) is disordered.

This sequence belongs to the 7S seed storage protein family. As to quaternary structure, component of globulins complexes which accumulate in seeds.

In terms of biological role, seed storage protein. Accumulates during seed development and is hydrolyzed after germination to provide a carbon and nitrogen source for the developing seedling. The chain is Conglutin beta 4 from Lupinus angustifolius (Narrow-leaved blue lupine).